We begin with the raw amino-acid sequence, 99 residues long: DNA-binding protein Fis (99 aa).

Residues 75–94 (QTRAANMLGINRGTLRKKLK) constitute a DNA-binding region (H-T-H motif).

This sequence belongs to the transcriptional regulatory Fis family. In terms of assembly, homodimer.

In terms of biological role, activates ribosomal RNA transcription. Plays a direct role in upstream activation of rRNA promoters. In Haemophilus influenzae (strain PittEE), this protein is DNA-binding protein Fis.